Reading from the N-terminus, the 174-residue chain is Shikimate kinase (174 aa).

14–19 is an ATP binding site; sequence GAGKST. Mg(2+) is bound at residue serine 18. Residues aspartate 36, arginine 60, and glycine 82 each contribute to the substrate site. Residue arginine 120 coordinates ATP. Arginine 141 serves as a coordination point for substrate. Arginine 158 contacts ATP.

This sequence belongs to the shikimate kinase family. As to quaternary structure, monomer. Mg(2+) serves as cofactor.

The protein resides in the cytoplasm. The catalysed reaction is shikimate + ATP = 3-phosphoshikimate + ADP + H(+). It functions in the pathway metabolic intermediate biosynthesis; chorismate biosynthesis; chorismate from D-erythrose 4-phosphate and phosphoenolpyruvate: step 5/7. In terms of biological role, catalyzes the specific phosphorylation of the 3-hydroxyl group of shikimic acid using ATP as a cosubstrate. The protein is Shikimate kinase of Buchnera aphidicola subsp. Baizongia pistaciae (strain Bp).